A 122-amino-acid polypeptide reads, in one-letter code: Large ribosomal subunit protein uL14 (122 aa).

The protein belongs to the universal ribosomal protein uL14 family. As to quaternary structure, part of the 50S ribosomal subunit. Forms a cluster with proteins L3 and L19. In the 70S ribosome, L14 and L19 interact and together make contacts with the 16S rRNA in bridges B5 and B8.

Its function is as follows. Binds to 23S rRNA. Forms part of two intersubunit bridges in the 70S ribosome. In Corynebacterium efficiens (strain DSM 44549 / YS-314 / AJ 12310 / JCM 11189 / NBRC 100395), this protein is Large ribosomal subunit protein uL14.